A 207-amino-acid chain; its full sequence is LexA repressor (207 aa).

The segment at residues 29–49 (VREICSAVDLSSTSTVHGHLA) is a DNA-binding region (H-T-H motif). Catalysis depends on for autocatalytic cleavage activity residues serine 128 and lysine 166.

The protein belongs to the peptidase S24 family. In terms of assembly, homodimer.

The catalysed reaction is Hydrolysis of Ala-|-Gly bond in repressor LexA.. Functionally, represses a number of genes involved in the response to DNA damage (SOS response), including recA and lexA. In the presence of single-stranded DNA, RecA interacts with LexA causing an autocatalytic cleavage which disrupts the DNA-binding part of LexA, leading to derepression of the SOS regulon and eventually DNA repair. This is LexA repressor from Lactobacillus johnsonii (strain CNCM I-12250 / La1 / NCC 533).